The following is an 807-amino-acid chain: MLRFPTCFPSFRVVGEKQLPQEIIFLAWSPKRDLIALANTTGEVLLHRLASFHRVWSFPPNESTGKEVTCLAWRPDGKLLAFALADTKKIILCDVEKPESLHSFSVEAPVSCMHWTEVTVESSVLTSFYNAEDESNLLLPKLPTLPKNYNSTSKIFSEENSDEIIKLLGDVRLNILVLGGSSGFIELYAYGMFKIARVTGIAGTCIALCLSSDLKSLSVVTEVSSGGESEVSYFQLETNLLYSFLPEVTRMARKFTHISALLQYINLSLTCMCEAWEEILMQMDSRLTKFVQEKPTTTSVQDEFMHLLLWGKASAELQTLLMNQLTVKGLKKLGQSIESSYSSIQKLVISHLQSGSESLLYHLSELKGMASWKQKYEPLGLDAAGIEDAITAVGSFILKANELLQVIDSSMKNFKAFFRWLYVAMLRMTEDHVLPELNKMTQKDITFVAEFLTEHFNEAPDLYNRKGKYFNVERVGQYLKDEDDDLVSPPNTEGNQWYDFLQNSTHLKESPLLFPYYPRKSLHFVKRRMENVIDQCLQKPADVIGRSMNQAICIPLYKDARSMDCARRLLKFPFLWNNKTSNLHYLLFTILEDSVYKMCILRRHTDISQSVSNGLIGIKFGSFTSASADKVRRSSYSCLDAQFYDDETVTVILKDSMGREGRDRILVQLSLSLVYNSEDSDEYEFTGSYSTRLDEQGSIIPTRTMHFEKHWRLLESMRAQYVAGNGLRKVSCVLSSNLRHVRVFEMDIDDEWEIDESSDDEEEAGGKPVKIKEEVLSESETEAHQDAAALDPDVVIKVEKLDPELDS.

Y469 is subject to Phosphotyrosine. Residues 755–788 (DESSDDEEEAGGKPVKIKEEVLSESETEAHQDAA) form a disordered region. Residues S757 and S758 each carry the phosphoserine modification. Residues 770 to 785 (KIKEEVLSESETEAHQ) show a composition bias toward basic and acidic residues. K772 participates in a covalent cross-link: Glycyl lysine isopeptide (Lys-Gly) (interchain with G-Cter in SUMO2). Phosphoserine is present on residues S777 and S779. A Glycyl lysine isopeptide (Lys-Gly) (interchain with G-Cter in SUMO2) cross-link involves residue K797.

It belongs to the APC4 family. As to quaternary structure, the mammalian APC/C is composed at least of 14 distinct subunits ANAPC1, ANAPC2, CDC27/APC3, ANAPC4, ANAPC5, CDC16/APC6, ANAPC7, CDC23/APC8, ANAPC10, ANAPC11, CDC26/APC12, ANAPC13, ANAPC15 and ANAPC16 that assemble into a complex of at least 19 chains with a combined molecular mass of around 1.2 MDa; APC/C interacts with FZR1 and FBXO5. In the context of the APC/C complex, directly interacts with UBE2S. Interacts with FBXO43.

The protein resides in the nucleus. The protein operates within protein modification; protein ubiquitination. In terms of biological role, component of the anaphase promoting complex/cyclosome (APC/C), a cell cycle-regulated E3 ubiquitin ligase that controls progression through mitosis and the G1 phase of the cell cycle. The APC/C complex acts by mediating ubiquitination and subsequent degradation of target proteins: it mainly mediates the formation of 'Lys-11'-linked polyubiquitin chains and, to a lower extent, the formation of 'Lys-48'- and 'Lys-63'-linked polyubiquitin chains. The APC/C complex catalyzes assembly of branched 'Lys-11'-/'Lys-48'-linked branched ubiquitin chains on target proteins. The polypeptide is Anaphase-promoting complex subunit 4 (Anapc4) (Mus musculus (Mouse)).